The following is a 365-amino-acid chain: Cyclin-D5-2 (365 aa).

The protein belongs to the cyclin family. Cyclin D subfamily.

This is Cyclin-D5-2 (CYCD5-2) from Oryza sativa subsp. japonica (Rice).